Here is a 494-residue protein sequence, read N- to C-terminus: Guanosine-5'-triphosphate,3'-diphosphate pyrophosphatase (494 aa).

This sequence belongs to the GppA/Ppx family. GppA subfamily.

The enzyme catalyses guanosine 3'-diphosphate 5'-triphosphate + H2O = guanosine 3',5'-bis(diphosphate) + phosphate + H(+). It functions in the pathway purine metabolism; ppGpp biosynthesis; ppGpp from GTP: step 2/2. Catalyzes the conversion of pppGpp to ppGpp. Guanosine pentaphosphate (pppGpp) is a cytoplasmic signaling molecule which together with ppGpp controls the 'stringent response', an adaptive process that allows bacteria to respond to amino acid starvation, resulting in the coordinated regulation of numerous cellular activities. The chain is Guanosine-5'-triphosphate,3'-diphosphate pyrophosphatase from Escherichia coli (strain 55989 / EAEC).